The primary structure comprises 185 residues: MALGKKRIVTQKPNLRQRRDVDNGGLGLGLEFVQYKRGFGRKRILISSGDEMEDSIFTSPVGKKLCDDKTTSVAEGQSRELEDLPLDILVRIICGVEHEDLKQLFHVSKTIREATMIAKQSHFAYSTPRKTSVFHHGRFGWDKPFDVEDDDEEIEAPGAPLQKRYRLSRINRNKDDSGVSVALFH.

Residues 78–126 (SRELEDLPLDILVRIICGVEHEDLKQLFHVSKTIREATMIAKQSHFAYS) enclose the F-box domain.

This Arabidopsis thaliana (Mouse-ear cress) protein is F-box protein At1g61340.